The following is a 94-amino-acid chain: C-C motif chemokine 17 (94 aa).

The first 23 residues, Met1–Ala23, serve as a signal peptide directing secretion. 2 disulfides stabilise this stretch: Cys33–Cys57 and Cys34–Cys73.

It belongs to the intercrine beta (chemokine CC) family. Constitutively expressed in thymus. Detected at lower levels in the lung, colon and small intestine. Expressed in stimulated peripheral blood mononuclear cells, but not in resting cells.

It localises to the secreted. Functionally, chemokine, which displays chemotactic activity for T lymphocytes, preferentially Th2 cells, but not monocytes or granulocytes. Therefore plays an important role in a wide range of inflammatory and immunological processes. Acts by binding to CCR4 at T-cell surface. Mediates GM-CSF/CSF2-driven pain and inflammation. In the brain, required to maintain the typical, highly branched morphology of hippocampal microglia under homeostatic conditions. May be important for the appropriate adaptation of microglial morphology and synaptic plasticity to acute lipopolysaccharide (LPS)-induced neuroinflammation. Plays a role in wound healing, mainly by inducing fibroblast migration into the wound. In Homo sapiens (Human), this protein is C-C motif chemokine 17 (CCL17).